The sequence spans 249 residues: Indole-3-glycerol phosphate synthase (249 aa).

The protein belongs to the TrpC family.

The enzyme catalyses 1-(2-carboxyphenylamino)-1-deoxy-D-ribulose 5-phosphate + H(+) = (1S,2R)-1-C-(indol-3-yl)glycerol 3-phosphate + CO2 + H2O. It participates in amino-acid biosynthesis; L-tryptophan biosynthesis; L-tryptophan from chorismate: step 4/5. This Pyrobaculum neutrophilum (strain DSM 2338 / JCM 9278 / NBRC 100436 / V24Sta) (Thermoproteus neutrophilus) protein is Indole-3-glycerol phosphate synthase.